Consider the following 317-residue polypeptide: NADPH-dependent D-xylose reductase (317 aa).

Tyrosine 47 acts as the Proton donor in catalysis. Histidine 109 lines the substrate pocket. NADP(+) is bound by residues 164–165 (SN), 213–222 (SSFGPQSFVE), and 269–279 (KSNNPDRLLSN).

Belongs to the aldo/keto reductase family.

It carries out the reaction xylitol + NAD(+) = D-xylose + NADH + H(+). The catalysed reaction is xylitol + NADP(+) = D-xylose + NADPH + H(+). The protein operates within carbohydrate metabolism; D-xylose degradation. Its function is as follows. Reduces D-xylose into xylitol. Preferentially utilizes NADPH as a cosubstrate. The sequence is that of NADPH-dependent D-xylose reductase (XYL1) from Meyerozyma guilliermondii (strain ATCC 6260 / CBS 566 / DSM 6381 / JCM 1539 / NBRC 10279 / NRRL Y-324) (Yeast).